The primary structure comprises 271 residues: Putative phosphoenolpyruvate synthase regulatory protein (271 aa).

An ADP-binding site is contributed by 152-159 (GVSRSGKT).

This sequence belongs to the pyruvate, phosphate/water dikinase regulatory protein family. PSRP subfamily.

The enzyme catalyses [pyruvate, water dikinase] + ADP = [pyruvate, water dikinase]-phosphate + AMP + H(+). The catalysed reaction is [pyruvate, water dikinase]-phosphate + phosphate + H(+) = [pyruvate, water dikinase] + diphosphate. Bifunctional serine/threonine kinase and phosphorylase involved in the regulation of the phosphoenolpyruvate synthase (PEPS) by catalyzing its phosphorylation/dephosphorylation. This chain is Putative phosphoenolpyruvate synthase regulatory protein, found in Thiocapsa roseopersicina.